We begin with the raw amino-acid sequence, 185 residues long: NADH-ubiquinone oxidoreductase chain 6 (185 aa).

5 consecutive transmembrane segments (helical) span residues 3–23 (SLFM…ISTP), 28–48 (SVFW…SLGL), 54–74 (IFII…IMLI), 87–107 (HFLP…TNSP), and 134–154 (ELVL…ILLA).

Belongs to the complex I subunit 6 family.

The protein resides in the mitochondrion membrane. The catalysed reaction is a ubiquinone + NADH + 5 H(+)(in) = a ubiquinol + NAD(+) + 4 H(+)(out). Functionally, core subunit of the mitochondrial membrane respiratory chain NADH dehydrogenase (Complex I) that is believed to belong to the minimal assembly required for catalysis. Complex I functions in the transfer of electrons from NADH to the respiratory chain. The immediate electron acceptor for the enzyme is believed to be ubiquinone. This is NADH-ubiquinone oxidoreductase chain 6 (ND6) from Sarcophyton glaucum (Toadstool umbrella leather coral).